The following is a 153-amino-acid chain: Large ribosomal subunit protein uL15 (153 aa).

The disordered stretch occupies residues 1 to 42; sequence MRLNTIKPGMGSTKPRRRVGRGIGSGLGKTCGRGHKGQKSRA. A compositionally biased stretch (gly residues) spans 21 to 31; it reads RGIGSGLGKTC.

The protein belongs to the universal ribosomal protein uL15 family. As to quaternary structure, part of the 50S ribosomal subunit.

In terms of biological role, binds to the 23S rRNA. This is Large ribosomal subunit protein uL15 from Nitrosomonas eutropha (strain DSM 101675 / C91 / Nm57).